Here is a 193-residue protein sequence, read N- to C-terminus: Cilia- and flagella-associated protein 20 (193 aa).

The protein belongs to the CFAP20 family. As to quaternary structure, microtubule inner protein component of sperm flagellar doublet microtubules.

The protein localises to the nucleus. The protein resides in the cytoplasm. It localises to the cytoskeleton. It is found in the microtubule organizing center. Its subcellular location is the centrosome. The protein localises to the centriole. The protein resides in the cilium basal body. It localises to the cilium axoneme. It is found in the flagellum axoneme. Cilium- and flagellum-specific protein that plays a role in axonemal structure organization and motility. Microtubule inner protein (MIP) part of the dynein-decorated doublet microtubules (DMTs) in cilia axoneme, which is required for motile cilia beating. Involved in the regulation of the size and morphology of cilia. Required for axonemal microtubules polyglutamylation. In Homo sapiens (Human), this protein is Cilia- and flagella-associated protein 20.